The following is a 220-amino-acid chain: Fructose-6-phosphate aldolase 2 (220 aa).

The active-site Schiff-base intermediate with substrate is the Lys85.

This sequence belongs to the transaldolase family. Type 3A subfamily. Homodecamer.

It localises to the cytoplasm. It carries out the reaction beta-D-fructose 6-phosphate = dihydroxyacetone + D-glyceraldehyde 3-phosphate. Functionally, catalyzes the reversible formation of fructose 6-phosphate from dihydroxyacetone and D-glyceraldehyde 3-phosphate via an aldolization reaction. The sequence is that of Fructose-6-phosphate aldolase 2 (fsaB) from Escherichia coli O6:H1 (strain CFT073 / ATCC 700928 / UPEC).